Reading from the N-terminus, the 3086-residue chain is Genome polyprotein (3086 aa).

A Peptidase S30 domain is found at 122 to 256; it reads RRSKILACDL…RAGIHTIKHY (135 aa). Catalysis depends on for P1 proteinase activity residues histidine 173, aspartate 182, and serine 215. The 122-residue stretch at 590 to 711 folds into the Peptidase C6 domain; it reads YYVAPEGYCY…TGEMLDYNVG (122 aa). Catalysis depends on for helper component proteinase activity residues cysteine 598 and histidine 670. Residues 1189–1341 form the Helicase ATP-binding domain; sequence ISSDTANAEF…PMFPVRVSEA (153 aa). 1202-1209 lines the ATP pocket; the sequence is GGVGTGKS. A DEAH box motif is present at residues 1291–1294; the sequence is DECH. O-(5'-phospho-RNA)-tyrosine is present on tyrosine 1870. Residues 1970-1990 are disordered; sequence HDGELRQSRPSRPIQKDQVPA. In terms of domain architecture, Peptidase C4 spans 2000–2217; the sequence is SKSIAKGLRD…VNYGTMDLTS (218 aa). Residues histidine 2045, aspartate 2080, and cysteine 2149 each act as for nuclear inclusion protein A activity in the active site. Residues 2482–2606 enclose the RdRp catalytic domain; that stretch reads WDYFDADGSR…AVEPSLSDKI (125 aa). Over residues 2762–2821 the composition is skewed to low complexity; it reads TAASSAATQTSTTSPTVTSTSGASTSTSSGTTSAPLASTTPPVSATTTPSTGTTAPTTPT. The disordered stretch occupies residues 2762-2822; that stretch reads TAASSAATQT…GTTAPTTPTV (61 aa). At threonine 3069 the chain carries Phosphothreonine.

This sequence belongs to the potyviridae genome polyprotein family. Post-translationally, VPg is uridylylated by the polymerase and is covalently attached to the 5'-end of the genomic RNA. This uridylylated form acts as a nucleotide-peptide primer for the polymerase. Genome polyprotein of potyviruses undergoes post-translational proteolytic processing by the main proteinase NIa-pro resulting in the production of at least ten individual proteins. The P1 proteinase and the HC-pro cleave only their respective C-termini autocatalytically. 6K1 is essential for proper proteolytic separation of P3 from CI.

The protein localises to the host cytoplasmic vesicle membrane. The protein resides in the host cytoplasmic vesicle. Its subcellular location is the virion. The catalysed reaction is RNA(n) + a ribonucleoside 5'-triphosphate = RNA(n+1) + diphosphate. It carries out the reaction Hydrolyzes glutaminyl bonds, and activity is further restricted by preferences for the amino acids in P6 - P1' that vary with the species of potyvirus, e.g. Glu-Xaa-Xaa-Tyr-Xaa-Gln-|-(Ser or Gly) for the enzyme from tobacco etch virus. The natural substrate is the viral polyprotein, but other proteins and oligopeptides containing the appropriate consensus sequence are also cleaved.. The enzyme catalyses Hydrolyzes a Gly-|-Gly bond at its own C-terminus, commonly in the sequence -Tyr-Xaa-Val-Gly-|-Gly, in the processing of the potyviral polyprotein.. In terms of biological role, required for aphid transmission and also has proteolytic activity. Only cleaves a Gly-Gly dipeptide at its own C-terminus. Interacts with virions and aphid stylets. Acts as a suppressor of RNA-mediated gene silencing, also known as post-transcriptional gene silencing (PTGS), a mechanism of plant viral defense that limits the accumulation of viral RNAs. May have RNA-binding activity. Its function is as follows. Has helicase activity. It may be involved in replication. Functionally, indispensable for virus replication. Reduces the abundance of host transcripts related to jasmonic acid biosynthesis therefore altering the host defenses. In order to increase its own stability, decreases host protein degradation pathways. Indispensable for virus replication. In terms of biological role, mediates the cap-independent, EIF4E-dependent translation of viral genomic RNAs. Binds to the cap-binding site of host EIF4E and thus interferes with the host EIF4E-dependent mRNA export and translation. VPg-RNA directly binds EIF4E and is a template for transcription. Also forms trimeric complexes with EIF4E-EIF4G, which are templates for translation. Its function is as follows. Has RNA-binding and proteolytic activities. Functionally, an RNA-dependent RNA polymerase that plays an essential role in the virus replication. Involved in aphid transmission, cell-to-cell and systemis movement, encapsidation of the viral RNA and in the regulation of viral RNA amplification. The sequence is that of Genome polyprotein from Dactylis glomerata (Orchard grass).